Here is a 90-residue protein sequence, read N- to C-terminus: Electron transfer flavoprotein regulatory factor 1 (90 aa).

This sequence belongs to the complex I LYR family. In terms of assembly, homotetramer. Interacts with NDUFAB1. Interacts with ETFA. Interacts with ETFB.

It is found in the mitochondrion. Functionally, acts as a regulator of the electron transfer flavoprotein by promoting the removal of flavin from the ETF holoenzyme (composed of ETFA and ETFB). This is Electron transfer flavoprotein regulatory factor 1 from Homo sapiens (Human).